Consider the following 422-residue polypeptide: Probable FBD-associated F-box protein At1g32375 (422 aa).

The F-box domain maps to 1–53 (MDKLSQLPEALLVRILSLLSAKDVVSTMVLSKRWQFLWMLVPKLIYDDSYQAI). Residues 342-392 (CWNEPSAVPECLLTSLETLEWVKYEGTEEEKEVAAFILRSGSCLKKVTISS) enclose the FBD domain.

The protein is Probable FBD-associated F-box protein At1g32375 of Arabidopsis thaliana (Mouse-ear cress).